A 507-amino-acid chain; its full sequence is Histidine ammonia-lyase (507 aa).

The segment at residues 143–145 (SSG) is a cross-link (5-imidazolinone (Ser-Gly)). S144 bears the 2,3-didehydroalanine (Ser) mark.

Belongs to the PAL/histidase family. Contains an active site 4-methylidene-imidazol-5-one (MIO), which is formed autocatalytically by cyclization and dehydration of residues Ser-Ser-Gly.

Its subcellular location is the cytoplasm. The catalysed reaction is L-histidine = trans-urocanate + NH4(+). Its pathway is amino-acid degradation; L-histidine degradation into L-glutamate; N-formimidoyl-L-glutamate from L-histidine: step 1/3. This is Histidine ammonia-lyase from Alkaliphilus metalliredigens (strain QYMF).